The sequence spans 231 residues: Cilia- and flagella-associated protein 299 (231 aa).

It is found in the cytoplasm. The protein localises to the nucleus. In terms of biological role, may be involved in spermatogenesis. The protein is Cilia- and flagella-associated protein 299 of Bos taurus (Bovine).